Here is a 106-residue protein sequence, read N- to C-terminus: Large ribosomal subunit protein uL24 (106 aa).

It belongs to the universal ribosomal protein uL24 family. As to quaternary structure, part of the 50S ribosomal subunit.

One of two assembly initiator proteins, it binds directly to the 5'-end of the 23S rRNA, where it nucleates assembly of the 50S subunit. Its function is as follows. One of the proteins that surrounds the polypeptide exit tunnel on the outside of the subunit. The polypeptide is Large ribosomal subunit protein uL24 (Bordetella avium (strain 197N)).